Consider the following 266-residue polypeptide: Dickkopf-related protein 1 (266 aa).

An N-terminal signal peptide occupies residues 1-31 (MMALGAAGATRVFVAMVAAALGGHPLLGVSA). O-linked (GalNAc...) serine glycosylation occurs at S61. 10 disulfide bridges follow: C85–C97, C91–C111, C114–C128, C121–C133, C127–C138, C189–C201, C195–C210, C200–C237, C220–C245, and C239–C263. The interval 85 to 138 (CAEDEECGTDEYCASPTRGGDAGVQICLACRKRRKRCMRHAMCCPGNYCKNGIC) is DKK-type Cys-1. The tract at residues 189 to 263 (CLRSSDCASG…ASNSSRLHTC (75 aa)) is DKK-type Cys-2. N256 carries an N-linked (GlcNAc...) asparagine glycan.

The protein belongs to the dickkopf family. As to quaternary structure, interacts with LRP6. Interacts (via the C-terminal Cys-rich domain) with LRP5 (via beta-propeller regions 3 and 4); the interaction, enhanced by MESD and or KREMEN, antagonizes Wnt-mediated signaling. Forms a ternary complex with LRP6 and KREM1. Interacts with KREM1. In terms of tissue distribution, placenta.

It localises to the secreted. Its function is as follows. Antagonizes canonical Wnt signaling by inhibiting LRP5/6 interaction with Wnt and by forming a ternary complex with the transmembrane protein KREMEN that promotes internalization of LRP5/6. DKKs play an important role in vertebrate development, where they locally inhibit Wnt regulated processes such as antero-posterior axial patterning, limb development, somitogenesis and eye formation. In the adult, Dkks are implicated in bone formation and bone disease, cancer and Alzheimer disease. Inhibits the pro-apoptotic function of KREMEN1 in a Wnt-independent manner, and has anti-apoptotic activity. The polypeptide is Dickkopf-related protein 1 (DKK1) (Homo sapiens (Human)).